Consider the following 102-residue polypeptide: NADH-quinone oxidoreductase subunit K (102 aa).

The next 3 helical transmembrane spans lie at isoleucine 5–leucine 25, isoleucine 31–phenylalanine 51, and phenylalanine 66–phenylalanine 86.

The protein belongs to the complex I subunit 4L family. As to quaternary structure, NDH-1 is composed of 14 different subunits. Subunits NuoA, H, J, K, L, M, N constitute the membrane sector of the complex.

The protein resides in the cell inner membrane. The catalysed reaction is a quinone + NADH + 5 H(+)(in) = a quinol + NAD(+) + 4 H(+)(out). Its function is as follows. NDH-1 shuttles electrons from NADH, via FMN and iron-sulfur (Fe-S) centers, to quinones in the respiratory chain. The immediate electron acceptor for the enzyme in this species is believed to be ubiquinone. Couples the redox reaction to proton translocation (for every two electrons transferred, four hydrogen ions are translocated across the cytoplasmic membrane), and thus conserves the redox energy in a proton gradient. In Chelativorans sp. (strain BNC1), this protein is NADH-quinone oxidoreductase subunit K.